The chain runs to 421 residues: Gamma-glutamyl phosphate reductase (421 aa).

Belongs to the gamma-glutamyl phosphate reductase family.

The protein localises to the cytoplasm. It carries out the reaction L-glutamate 5-semialdehyde + phosphate + NADP(+) = L-glutamyl 5-phosphate + NADPH + H(+). The protein operates within amino-acid biosynthesis; L-proline biosynthesis; L-glutamate 5-semialdehyde from L-glutamate: step 2/2. In terms of biological role, catalyzes the NADPH-dependent reduction of L-glutamate 5-phosphate into L-glutamate 5-semialdehyde and phosphate. The product spontaneously undergoes cyclization to form 1-pyrroline-5-carboxylate. The protein is Gamma-glutamyl phosphate reductase of Roseobacter denitrificans (strain ATCC 33942 / OCh 114) (Erythrobacter sp. (strain OCh 114)).